A 151-amino-acid polypeptide reads, in one-letter code: Aspartate carbamoyltransferase regulatory chain (151 aa).

Positions 107, 112, 135, and 138 each coordinate Zn(2+).

This sequence belongs to the PyrI family. In terms of assembly, contains catalytic and regulatory chains. It depends on Zn(2+) as a cofactor.

Functionally, involved in allosteric regulation of aspartate carbamoyltransferase. The polypeptide is Aspartate carbamoyltransferase regulatory chain (Psychromonas ingrahamii (strain DSM 17664 / CCUG 51855 / 37)).